We begin with the raw amino-acid sequence, 148 residues long: Holo-[acyl-carrier-protein] synthase (148 aa).

Residues Asp-9 and Glu-63 each coordinate Mg(2+).

The protein belongs to the P-Pant transferase superfamily. AcpS family. The cofactor is Mg(2+).

It is found in the cytoplasm. The enzyme catalyses apo-[ACP] + CoA = holo-[ACP] + adenosine 3',5'-bisphosphate + H(+). Functionally, transfers the 4'-phosphopantetheine moiety from coenzyme A to a Ser of acyl-carrier-protein. This chain is Holo-[acyl-carrier-protein] synthase, found in Burkholderia cenocepacia (strain HI2424).